A 201-amino-acid chain; its full sequence is Recombination protein RecR (201 aa).

Residues 57 to 72 (CKLCQIYTEQPLCNIC) form a C4-type zinc finger. In terms of domain architecture, Toprim spans 80-175 (TLLCVVESPA…KCSRIAHGVP (96 aa)).

It belongs to the RecR family.

Functionally, may play a role in DNA repair. It seems to be involved in an RecBC-independent recombinational process of DNA repair. It may act with RecF and RecO. This Coxiella burnetii (strain RSA 493 / Nine Mile phase I) protein is Recombination protein RecR.